Here is a 43-residue protein sequence, read N- to C-terminus: Protein PsbN (43 aa).

The helical transmembrane segment at 5 to 27 threads the bilayer; that stretch reads NLVAIFVSCLLVSLTGYALYTSF.

The protein belongs to the PsbN family.

It is found in the plastid. It localises to the chloroplast thylakoid membrane. In terms of biological role, may play a role in photosystem I and II biogenesis. This Ephedra sinica (Chinese ephedra) protein is Protein PsbN.